Here is a 314-residue protein sequence, read N- to C-terminus: Olfactory receptor 9Q2 (314 aa).

Residues 1 to 25 (MAERNYTVVTEFFLTAFTEHLQWRV) lie on the Extracellular side of the membrane. N-linked (GlcNAc...) asparagine glycosylation occurs at Asn5. Residues 26–46 (PLFLIFLSFYLATMLGNTGMI) form a helical membrane-spanning segment. Residues 47–54 (LLIRGDRR) are Cytoplasmic-facing. The chain crosses the membrane as a helical span at residues 55–75 (LHTPMYFFLSHLSLVDICYSS). Residues 76 to 99 (AIIPQMLAVLWEHGTTISQARCAA) lie on the Extracellular side of the membrane. The cysteines at positions 97 and 189 are disulfide-linked. The helical transmembrane segment at 100 to 120 (QFFLFTFFASIDCYLLAIMAY) threads the bilayer. At 121–139 (DRYTAVCQPLLYVTIITEK) the chain is on the cytoplasmic side. A helical transmembrane segment spans residues 140–160 (ARWGLVTGAYVAGFFSAFVRT). Residues 161–197 (VTAFTLSFCGNNEINFIFCDLPPLLKLSCGDSYTQEV) lie on the Extracellular side of the membrane. Residues 198–217 (VIIVFALFVMPACILVILVS) traverse the membrane as a helical segment. The Cytoplasmic portion of the chain corresponds to 218–237 (YLFIIVAILQIHSAGGRAKT). Residues 238-258 (FSTCASHLTAVALFFGTLIFM) form a helical membrane-spanning segment. Topologically, residues 259–271 (YLRDNTGQSSEGD) are extracellular. Residues 272 to 292 (RVVSVLYTVVTPMLNPLIYSL) traverse the membrane as a helical segment. Topologically, residues 293 to 314 (RNKEVKEATRKALSKSKPARRP) are cytoplasmic.

It belongs to the G-protein coupled receptor 1 family.

Its subcellular location is the cell membrane. In terms of biological role, odorant receptor. The sequence is that of Olfactory receptor 9Q2 (OR9Q2) from Homo sapiens (Human).